The chain runs to 299 residues: MSFDNLRYLESEAIHIIREVAATFSNPVVLYSIGKDSSVLLHLAMKAFFPGKPPFPFLHVDTRWKFREMIDFRDRMMREMDLKLIVHVNQDGIDQGISPFRDGSNVHTHMMKTMALRQALDKFSFDAALAGARREEEKSRAKERIFSIRNAQHAWDPKRQRPEMWRTYNTRVSAGETMRVFPLSNWTELDVWEYNQKENIPVVPLYFAAPRPVVQRGAGMIMVDDERMPLEPDETVTQRMIRFRTLGCYPLTGAIESSAETVPEILREIVEARTSERQSRLIDFDEAGAMEKKKREGYF.

This sequence belongs to the PAPS reductase family. CysD subfamily. As to quaternary structure, sulfate-activating enzymes, NodP and NodQ, may be physically associated.

The enzyme catalyses sulfate + ATP + H(+) = adenosine 5'-phosphosulfate + diphosphate. In terms of biological role, proposed to provide activated sulfate for transfer to nod factor. In Rhizobium tropici, this protein is Sulfate adenylyltransferase subunit 2 (nodP).